Here is a 147-residue protein sequence, read N- to C-terminus: uncharacterized protein (147 aa).

This is an uncharacterized protein from Ureaplasma parvum serovar 3 (strain ATCC 700970).